A 294-amino-acid chain; its full sequence is Endonuclease G, mitochondrial (294 aa).

A mitochondrion-targeting transit peptide spans 1–44 (MRALRAGLTLALGAGLGAAAEHWRRREGKAPGLLGRVPLLPVVA). Threonine 125 carries the phosphothreonine modification. The active-site Proton acceptor is the histidine 138. A Mg(2+)-binding site is contributed by asparagine 169. Residues 283 to 293 (AGNLKAITAGS) form an essential for deoxyribonuclease activity region.

Belongs to the DNA/RNA non-specific endonuclease family. Homodimer; disulfide-linked. Homodimerization is essential for its activity. Interacts with YWHAG. Mg(2+) serves as cofactor. Post-translationally, GSK3-beta-mediated phosphorylation at Thr-125 is necessary for its interaction with YWHAG and the induction of autophagy.

It localises to the mitochondrion. In terms of biological role, endonuclease that preferentially catalyzes the cleavage of double-stranded 5-hydroxymethylcytosine (5hmC)-modified DNA. The 5hmC-modified nucleotide does not increase the binding affinity, but instead increases the efficiency of cutting and specifies the site of cleavage for the modified DNAs. Shows significantly higher affinity for four-stranded Holliday junction over duplex and single-stranded DNAs. Promotes conservative recombination when the DNA is 5hmC-modified. Promotes autophagy through the suppression of mTOR by its phosphorylation-mediated interaction with YWHAG and its endonuclease activity-mediated DNA damage response. GSK3-beta mediated phosphorylation of ENDOG enhances its interaction with YWHAG, leading to the release of TSC2 and PIK3C3 from YWHAG resulting in mTOR pathway suppression and autophagy initiation. Promotes cleavage of mtDNA in response to oxidative and nitrosative stress, in turn inducing compensatory mtDNA replication. The sequence is that of Endonuclease G, mitochondrial (Endog) from Mus musculus (Mouse).